The primary structure comprises 691 residues: MEIAPQEAPPVPGADGDIEEAPAEAGSPSPASPPADGRLKAAAKRVTFPSDEDIVSGAVEPKDPWRHAQNVTVDEVIGAYKQACQKLNCRQIPKLLRQLQEFTDLGHRLDCLDLKGEKLDYKTCEALEEVFKRLQFKVVDLEQTNLDEDGASALFDMIEYYESATHLNISFNKHIGTRGWQAAAHMMRKTSCLQYLDARNTPLLDHSAPFVARALRIRSSLAVLHLENASLSGRPLMLLATALKMNMNLRELYLADNKLNGLQDSAQLGNLLKFNCSLQILDLRNNHVLDSGLAYICEGLKEQRKGLVTLVLWNNQLTHTGMAFLGMTLPHTQSLETLNLGHNPIGNEGVRHLKNGLISNRSVLRLGLASTKLTCEGAVAVAEFIAESPRLLRLDLRENEIKTGGLMALSLALKVNHSLLRLDLDREPKKEAVKSFIETQKALLAEIQNGCKRNLVLAREREEKEQPPQLSASMPETTATEPQPDDEPAAGVQNGAPSPAPSPDSDSDSDSDGEEEEEEEGERDETPCPALVPPTDSLGPGDRSPPGSPSTPTEQRISVSSPGRGHKVFVVTRVESPPERAEPPASPTPPSPPPPPSPPASPSLPPAGAIDTRDTGSSEPQPPPEPPRSGPPLPNGLKPEFALALPPEPPPGPEVKGGSCGLEHELSCSKNEKELEELLLEASQESGQETL.

Positions 1–43 are disordered; the sequence is MEIAPQEAPPVPGADGDIEEAPAEAGSPSPASPPADGRLKAAA. 2 positions are modified to phosphoserine: Ser50 and Ser56. LRR repeat units lie at residues 220-240, 248-269, 277-297, 306-326, and 334-354; these read SLAVLHLENASLSGRPLMLLA, NLRELYLADNKLNGLQDSAQLG, SLQILDLRNNHVLDSGLAYIC, GLVTLVLWNNQLTHTGMAFLG, and SLETLNLGHNPIGNEGVRHLK. The disordered stretch occupies residues 460-662; it reads EREEKEQPPQ…PEVKGGSCGL (203 aa). Residues 468-481 show a composition bias toward polar residues; sequence PQLSASMPETTATE. A compositionally biased stretch (acidic residues) spans 505–523; that stretch reads SDSDSDSDGEEEEEEEGER. Ser561 carries the post-translational modification Phosphoserine. Composition is skewed to pro residues over residues 584 to 605 and 620 to 634; these read PASPTPPSPPPPPSPPASPSLP and PQPPPEPPRSGPPLP.

It belongs to the PPP1R37 family. In terms of assembly, interacts with PPP1CA.

In terms of biological role, inhibits phosphatase activity of protein phosphatase 1 (PP1) complexes. The protein is Protein phosphatase 1 regulatory subunit 37 (PPP1R37) of Homo sapiens (Human).